The chain runs to 381 residues: Malonyl-CoA-acyl carrier protein transacylase, mitochondrial (381 aa).

Active-site residues include serine 151 and histidine 268. At lysine 312 the chain carries N6-succinyllysine.

The protein belongs to the type II malonyltransferase family. As to expression, expressed in retinal ganglion cells.

Its subcellular location is the mitochondrion. It catalyses the reaction holo-[ACP] + malonyl-CoA = malonyl-[ACP] + CoA. The protein operates within lipid metabolism; fatty acid biosynthesis. Functionally, catalyzes the transfer of a malonyl moiety from malonyl-CoA to the free thiol group of the phosphopantetheine arm of the mitochondrial ACP protein (NDUFAB1). This suggests the existence of the biosynthesis of fatty acids in mitochondria. This Mus musculus (Mouse) protein is Malonyl-CoA-acyl carrier protein transacylase, mitochondrial.